A 465-amino-acid chain; its full sequence is Adenosylhomocysteinase (465 aa).

Residues T56, D131, and E191 each contribute to the substrate site. 192–194 (TTT) lines the NAD(+) pocket. Substrate is bound by residues K221 and D225. Residues N226, 255–260 (GYGDVG), E278, N313, 334–336 (IGH), and N379 contribute to the NAD(+) site.

The protein belongs to the adenosylhomocysteinase family. It depends on NAD(+) as a cofactor.

Its subcellular location is the cytoplasm. It carries out the reaction S-adenosyl-L-homocysteine + H2O = L-homocysteine + adenosine. Its pathway is amino-acid biosynthesis; L-homocysteine biosynthesis; L-homocysteine from S-adenosyl-L-homocysteine: step 1/1. In terms of biological role, may play a key role in the regulation of the intracellular concentration of adenosylhomocysteine. This Bartonella tribocorum (strain CIP 105476 / IBS 506) protein is Adenosylhomocysteinase.